We begin with the raw amino-acid sequence, 724 residues long: Catalase-peroxidase (724 aa).

Residues 1–26 (MDENKTKPTGKCPVMHGGNTSTGSSN) are disordered. Positions 98–225 (WHSAGSYRTT…LAAVQMGLIY (128 aa)) form a cross-link, tryptophyl-tyrosyl-methioninium (Trp-Tyr) (with M-251). The active-site Proton acceptor is histidine 99. The segment at residues 225–251 (YVNPEGVDGKSDPLRTAQDMRVTFSRM) is a cross-link (tryptophyl-tyrosyl-methioninium (Tyr-Met) (with W-98)). Histidine 266 contacts heme b.

Belongs to the peroxidase family. Peroxidase/catalase subfamily. Homodimer or homotetramer. The cofactor is heme b. Formation of the three residue Trp-Tyr-Met cross-link is important for the catalase, but not the peroxidase activity of the enzyme.

The catalysed reaction is H2O2 + AH2 = A + 2 H2O. The enzyme catalyses 2 H2O2 = O2 + 2 H2O. Bifunctional enzyme with both catalase and broad-spectrum peroxidase activity. The protein is Catalase-peroxidase of Pectobacterium atrosepticum (strain SCRI 1043 / ATCC BAA-672) (Erwinia carotovora subsp. atroseptica).